The chain runs to 170 residues: uncharacterized protein (170 aa).

The region spanning Met1 to Thr148 is the Ferritin-like diiron domain.

This is an uncharacterized protein from Ureaplasma parvum serovar 3 (strain ATCC 700970).